A 321-amino-acid polypeptide reads, in one-letter code: Biotin synthase (321 aa).

The 227-residue stretch at 45 to 271 folds into the Radical SAM core domain; that stretch reads YYGKKVKLNM…INPTKEIRIA (227 aa). The [4Fe-4S] cluster site is built by C63, C67, and C70. Residues C106, C139, C199, and R269 each contribute to the [2Fe-2S] cluster site.

This sequence belongs to the radical SAM superfamily. Biotin synthase family. In terms of assembly, homodimer. [4Fe-4S] cluster serves as cofactor. Requires [2Fe-2S] cluster as cofactor.

The catalysed reaction is (4R,5S)-dethiobiotin + (sulfur carrier)-SH + 2 reduced [2Fe-2S]-[ferredoxin] + 2 S-adenosyl-L-methionine = (sulfur carrier)-H + biotin + 2 5'-deoxyadenosine + 2 L-methionine + 2 oxidized [2Fe-2S]-[ferredoxin]. Its pathway is cofactor biosynthesis; biotin biosynthesis; biotin from 7,8-diaminononanoate: step 2/2. In terms of biological role, catalyzes the conversion of dethiobiotin (DTB) to biotin by the insertion of a sulfur atom into dethiobiotin via a radical-based mechanism. The sequence is that of Biotin synthase from Staphylococcus epidermidis (strain ATCC 35984 / DSM 28319 / BCRC 17069 / CCUG 31568 / BM 3577 / RP62A).